Here is a 285-residue protein sequence, read N- to C-terminus: 4-diphosphocytidyl-2-C-methyl-D-erythritol kinase (285 aa).

Residue Lys10 is part of the active site. 93 to 103 contacts ATP; it reads PIGGGLGGGSS. The active site involves Asp135.

This sequence belongs to the GHMP kinase family. IspE subfamily.

It carries out the reaction 4-CDP-2-C-methyl-D-erythritol + ATP = 4-CDP-2-C-methyl-D-erythritol 2-phosphate + ADP + H(+). The protein operates within isoprenoid biosynthesis; isopentenyl diphosphate biosynthesis via DXP pathway; isopentenyl diphosphate from 1-deoxy-D-xylulose 5-phosphate: step 3/6. In terms of biological role, catalyzes the phosphorylation of the position 2 hydroxy group of 4-diphosphocytidyl-2C-methyl-D-erythritol. The polypeptide is 4-diphosphocytidyl-2-C-methyl-D-erythritol kinase (Vesicomyosocius okutanii subsp. Calyptogena okutanii (strain HA)).